We begin with the raw amino-acid sequence, 469 residues long: Phenylalanine--tRNA ligase, mitochondrial (469 aa).

Residues 1-17 (MFLNRMMKTRTGLYRLY) constitute a mitochondrion transit peptide. Substrate contacts are provided by residues 126 to 129 (SAHE), Arg155, 162 to 164 (THY), 169 to 171 (QME), Glu302, and Phe329. The FDX-ACB domain occupies 372–469 (SKHPGSFRDV…LVKEYSVELR (98 aa)).

This sequence belongs to the class-II aminoacyl-tRNA synthetase family. As to quaternary structure, monomer.

The protein localises to the mitochondrion matrix. The enzyme catalyses tRNA(Phe) + L-phenylalanine + ATP = L-phenylalanyl-tRNA(Phe) + AMP + diphosphate + H(+). Its function is as follows. Is responsible for the charging of tRNA(Phe) with phenylalanine in mitochondrial translation. The chain is Phenylalanine--tRNA ligase, mitochondrial (MSF1) from Saccharomyces cerevisiae (strain ATCC 204508 / S288c) (Baker's yeast).